The following is a 427-amino-acid chain: Acetylornithine aminotransferase, mitochondrial (427 aa).

Lysine 279 carries the post-translational modification N6-(pyridoxal phosphate)lysine.

It belongs to the class-III pyridoxal-phosphate-dependent aminotransferase family. Pyridoxal 5'-phosphate serves as cofactor.

Its subcellular location is the mitochondrion matrix. It carries out the reaction N(2)-acetyl-L-ornithine + 2-oxoglutarate = N-acetyl-L-glutamate 5-semialdehyde + L-glutamate. Its pathway is amino-acid biosynthesis; L-arginine biosynthesis; N(2)-acetyl-L-ornithine from L-glutamate: step 4/4. This chain is Acetylornithine aminotransferase, mitochondrial (ARG8), found in Candida glabrata (strain ATCC 2001 / BCRC 20586 / JCM 3761 / NBRC 0622 / NRRL Y-65 / CBS 138) (Yeast).